We begin with the raw amino-acid sequence, 511 residues long: Ribose import ATP-binding protein RbsA (511 aa).

2 ABC transporter domains span residues 13–249 and 260–503; these read VSMD…VGRA and ALGE…AGIA. An ATP-binding site is contributed by 45–52; it reads GENGAGKS.

The protein belongs to the ABC transporter superfamily. Ribose importer (TC 3.A.1.2.1) family. The complex is composed of an ATP-binding protein (RbsA), two transmembrane proteins (RbsC) and a solute-binding protein (RbsB).

The protein resides in the cell inner membrane. It carries out the reaction D-ribose(out) + ATP + H2O = D-ribose(in) + ADP + phosphate + H(+). Functionally, part of the ABC transporter complex RbsABC involved in ribose import. Responsible for energy coupling to the transport system. The chain is Ribose import ATP-binding protein RbsA from Roseobacter denitrificans (strain ATCC 33942 / OCh 114) (Erythrobacter sp. (strain OCh 114)).